Reading from the N-terminus, the 370-residue chain is Protein Brevis radix-like 3 (370 aa).

Positions 140 to 221 (KEWVAQVEPG…NFEKVMELYN (82 aa)) constitute a BRX 1 domain. 2 stretches are compositionally biased toward polar residues: residues 231 to 248 (LQTP…QSVK) and 266 to 291 (PGSS…SSID). A disordered region spans residues 231-316 (LQTPPVSEDG…VSNASDMESE (86 aa)). The BRX 2 domain occupies 315–370 (SEWVEQDEPGIYITIRALPDGNRELRRVRFSRDKFGETHARLWWEQNRARIQQQYL).

This sequence belongs to the BRX family. As to expression, expressed in roots.

It localises to the nucleus. This is Protein Brevis radix-like 3 (BRXL3) from Arabidopsis thaliana (Mouse-ear cress).